We begin with the raw amino-acid sequence, 7388 residues long: Microtubule-actin cross-linking factor 1, isoforms 1/2/3/4/5 (7388 aa).

Residues 1 to 47 form a disordered region; it reads MSSSDEETLSERSCRSERSCRSERSYRSERSGSLSPCPPGDTLPWNL. Positions 1–295 are actin-binding; it reads MSSSDEETLS…VITYVSSIYD (295 aa). The residue at position 4 (S4) is a Phosphoserine. Over residues 9–30 the composition is skewed to basic and acidic residues; it reads LSERSCRSERSCRSERSYRSER. 2 positions are modified to phosphoserine: S35 and S57. Calponin-homology (CH) domains are found at residues 78–181 and 194–298; these read RVQK…LHFQ and MSAK…DAFP. LRR repeat units follow at residues 148–171 and 240–264; these read QRQV…LTLG and LVDM…VAER. Phosphoserine is present on S280. LRR repeat units follow at residues 377–399 and 441–464; these read LYKL…YHPN and LNCE…LESG. S814 is subject to Phosphoserine. The SH3 domain maps to 868 to 925; the sequence is KNTISVKAVCDYRQIEITICKNDECVLEDNSQRTKWKVISPTGNEAMVPSVCFLIPPP. An LRR 5 repeat occupies 1050–1073; sequence ISELKNIRLRLEEYEQRVVKRIQS. A Phosphoserine modification is found at S1122. LRR repeat units follow at residues 1128 to 1154, 1187 to 1210, and 1257 to 1282; these read VPTL…VYLN, LADL…VKDK, and HRVI…DYRA. 2 positions are modified to phosphoserine: S1367 and S1376. Plectin repeat units follow at residues 1577-1621, 1654-1696, 1769-1809, 1811-1848, and 1855-1886; these read LVLL…RELQ, LKIL…VLES, RLLE…CAIL, RQLQ…VILE, and GLLW…KILS. S2006 and S2051 each carry phosphoserine. A disordered region spans residues 2051–2085; the sequence is SQNKEYPDREDCTTEKGKKTTVETEDSSVENPEQD. The segment covering 2055–2072 has biased composition (basic and acidic residues); it reads EYPDREDCTTEKGKKTTV. S2077 carries the post-translational modification Phosphoserine. 6 Plectin repeats span residues 2290–2332, 2367–2410, 2411–2437, 2501–2543, 2581–2612, and 2686–2730; these read LNVL…KLME, NVLM…LERQ, VVTG…GLVD, RLLT…LKRV, EVQA…LTNE, and LKVL…ASHQ. 2 disordered regions span residues 3013–3034 and 3104–3174; these read EHDS…GKEA and SEPF…NECK. Over residues 3115–3124 the composition is skewed to basic and acidic residues; the sequence is EGLHYQESDG. Residue S3122 is modified to Phosphoserine. Over residues 3129–3158 the composition is skewed to polar residues; the sequence is TGPSQISKTDKSFQGTTRQETNYQDSWVTS. 2 LRR repeats span residues 3239 to 3262 and 3264 to 3283; these read LTGE…SIED and VTQR…LFKG. Positions 3321–3332 are enriched in basic and acidic residues; the sequence is EKTPQEKLRESP. Residues 3321-3350 form a disordered region; it reads EKTPQEKLRESPGSEQTPFMTAPEGKGNGG. S3331 bears the Phosphoserine mark. LRR repeat units follow at residues 3646–3669 and 3696–3720; these read QQDL…IQNR and LTAL…TRVA. 2 Spectrin repeats span residues 3883-3957 and 4000-4108; these read ELQK…NSFK and QYHQ…SLLQ. S3927 carries the post-translational modification Phosphoserine. Residues 3936-3958 form an LRR 13 repeat; sequence KGDLRFVTISGQKVLDMENSFKE. LRR repeat units follow at residues 4125-4150 and 4261-4287; these read LQSI…VIQE and IQEL…ELSS. The stretch at 4466–4574 is one Spectrin 3 repeat; it reads RMEEVHKEAN…TVARQRQLEE (109 aa). 3 positions are modified to phosphoserine: S4495, S4496, and S4521. LRR repeat units follow at residues 4511–4534, 4601–4624, and 4769–4792; these read KAFL…LAGL, GVLG…QFML, and KKRL…RINR. 2 Spectrin repeats span residues 4800–4904 and 4909–5012; these read TQQF…SRLK and KAQK…SLEE. Phosphoserine is present on residues S4836 and S4962. 3 LRR repeats span residues 5051–5076, 5172–5194, and 5281–5304; these read NKNL…YLRN, NKIH…MLEE, and KEQV…LIQS. Spectrin repeat units lie at residues 5236–5341, 5348–5450, and 5455–5557; these read EDFY…QLQE, KFQD…QLED, and AKQF…LRTL. T5435 carries the phosphothreonine modification. A disordered region spans residues 5583–5603; it reads EELATSGGQSPTGEQIPQFQQ. Residues 5588 to 5603 show a composition bias toward polar residues; it reads SGGQSPTGEQIPQFQQ. LRR repeat units lie at residues 5695 to 5719 and 5804 to 5828; these read MALG…AFSI and AQLP…QLRE. 9 Spectrin repeats span residues 5783–5885, 6005–6110, 6115–6219, 6225–6328, 6333–6439, 6443–6547, 6552–6658, 6665–6766, and 6771–6874; these read NQFW…ALDE, LAEK…KLED, AVQY…HKLE, LGQF…QQLQ, QAQG…KLEE, LATE…RSLD, RAKQ…KLEE, QFMD…RLEQ, and AEVF…QRLE. Phosphoserine occurs at positions 5808 and 6032. N6-acetyllysine is present on K6210. An LRR 24 repeat occupies 6496-6519; that stretch reads RDQIIELDQTGNQLKFLSQKQDVV. The interval 6951 to 6981 is disordered; it reads PTHAPFIEKSRSGGRKSLSQPTPPPMPILSQ. S6967 is subject to Phosphoserine. 2 consecutive EF-hand domains span residues 7041-7076 and 7077-7112; these read HKKS…SKFP and TTKL…NKDA. Residues D7054, D7056, D7058, K7060, E7065, D7090, D7092, D7094, Y7096, and E7101 each coordinate Ca(2+). The GAR domain occupies 7117 to 7189; the sequence is TDADKIEDEV…EFLVKNDPCR (73 aa). The C-terminal tail stretch occupies residues 7117 to 7388; the sequence is TDADKIEDEV…ASPRTPGPKR (272 aa). Residues 7205 to 7388 form a disordered region; it reads PEGASQGMTP…ASPRTPGPKR (184 aa). Low complexity predominate over residues 7225–7259; the sequence is SSRAASPTRSSSSASQSNHSCTSMPSSPATPASGT. Position 7254 is a phosphothreonine (T7254). The segment covering 7275 to 7299 has biased composition (polar residues); the sequence is TFHSSRTSLAGDTSNSSSPASTGAK. Phosphoserine occurs at positions 7279 and 7292. Positions 7310-7324 are enriched in low complexity; the sequence is SRPGSRAGSRAGSRA. The interval 7313-7328 is 4 X 4 AA tandem repeats of [GS]-S-R-[AR]; that stretch reads GSRAGSRAGSRASSRR. S7330 and S7333 each carry phosphoserine. Residues 7339 to 7361 show a composition bias toward polar residues; it reads ETQSACSDTSESSAAGGQGNSRR.

The protein belongs to the plakin or cytolinker family. In terms of assembly, isoform 2: Interacts with MAPRE1, CLASP1, CLASP2, AXIN1 and LRP6. Isoform 2: Found in a complex composed of MACF1, APC, AXIN1, CTNNB1 and GSK3B. Isoform 2: Interacts with GOLGA4. Isoform 2: Interacts with CAMSAP3. Post-translationally, phosphorylated on serine residues in the C-terminal tail by GSK3B. Phosphorylation inhibits microtubule-binding and this plays a critical role in bulge stem cell migration and skin wound repair. Wnt-signaling can repress phosphorylation. In terms of tissue distribution, isoform 2: Ubiquitously expressed. Isoform 1: Expressed in cell lines NCI-H460, A-549 and HaCaT. Isoform 4: Expressed in heart, lung, pituitary and placenta, not found in brain, kidney, liver, pancreas or skeletal muscle.

It is found in the cytoplasm. The protein resides in the cytoskeleton. It localises to the golgi apparatus. The protein localises to the cell membrane. Its subcellular location is the cell projection. It is found in the ruffle membrane. Its function is as follows. F-actin-binding protein which plays a role in cross-linking actin to other cytoskeletal proteins and also binds to microtubules. Plays an important role in ERBB2-dependent stabilization of microtubules at the cell cortex. Acts as a positive regulator of Wnt receptor signaling pathway and is involved in the translocation of AXIN1 and its associated complex (composed of APC, CTNNB1 and GSK3B) from the cytoplasm to the cell membrane. Has actin-regulated ATPase activity and is essential for controlling focal adhesions (FAs) assembly and dynamics. Interaction with CAMSAP3 at the minus ends of non-centrosomal microtubules tethers microtubules minus-ends to actin filaments, regulating focal adhesion size and cell migration. May play role in delivery of transport vesicles containing GPI-linked proteins from the trans-Golgi network through its interaction with GOLGA4. Plays a key role in wound healing and epidermal cell migration. Required for efficient upward migration of bulge cells in response to wounding and this function is primarily rooted in its ability to coordinate microtubule dynamics and polarize hair follicle stem cells. As a regulator of actin and microtubule arrangement and stabilization, it plays an essential role in neurite outgrowth, branching and spine formation during brain development. This Homo sapiens (Human) protein is Microtubule-actin cross-linking factor 1, isoforms 1/2/3/4/5.